A 697-amino-acid chain; its full sequence is Heat shock protein homolog SSE1 (697 aa).

Residues 664–674 (EMAEKLAAQRA) show a composition bias toward low complexity. The interval 664–697 (EMAEKLAAQRAAEQKAQESKAESDKDAEGDIDLD) is disordered. Residues 675–691 (AEQKAQESKAESDKDAE) show a composition bias toward basic and acidic residues.

It belongs to the heat shock protein 70 family.

It localises to the cytoplasm. In Eremothecium gossypii (strain ATCC 10895 / CBS 109.51 / FGSC 9923 / NRRL Y-1056) (Yeast), this protein is Heat shock protein homolog SSE1 (SSE1).